The primary structure comprises 366 residues: Ribosomal RNA large subunit methyltransferase M (366 aa).

S-adenosyl-L-methionine-binding positions include Ser188, 221-224, Asp240, Asp260, and Asp277; that span reads CPGG. Lys306 functions as the Proton acceptor in the catalytic mechanism.

The protein belongs to the class I-like SAM-binding methyltransferase superfamily. RNA methyltransferase RlmE family. RlmM subfamily. Monomer.

It is found in the cytoplasm. It catalyses the reaction cytidine(2498) in 23S rRNA + S-adenosyl-L-methionine = 2'-O-methylcytidine(2498) in 23S rRNA + S-adenosyl-L-homocysteine + H(+). In terms of biological role, catalyzes the 2'-O-methylation at nucleotide C2498 in 23S rRNA. The sequence is that of Ribosomal RNA large subunit methyltransferase M from Salmonella gallinarum (strain 287/91 / NCTC 13346).